We begin with the raw amino-acid sequence, 86 residues long: Small ribosomal subunit protein bS20 (86 aa).

Belongs to the bacterial ribosomal protein bS20 family.

Its function is as follows. Binds directly to 16S ribosomal RNA. The protein is Small ribosomal subunit protein bS20 of Kocuria rhizophila (strain ATCC 9341 / DSM 348 / NBRC 103217 / DC2201).